Here is a 650-residue protein sequence, read N- to C-terminus: Acetyl-coenzyme A synthetase (650 aa).

Residues 191–194 (RGGR), T311, and N335 contribute to the CoA site. ATP is bound by residues 387–389 (GEP), 411–416 (DTWWQT), D500, and R515. S523 provides a ligand contact to CoA. R526 is a binding site for ATP. Residues V537, H539, and V542 each contribute to the Mg(2+) site. Residue R584 participates in CoA binding. K609 is subject to N6-acetyllysine.

It belongs to the ATP-dependent AMP-binding enzyme family. Mg(2+) is required as a cofactor. Post-translationally, acetylated. Deacetylation by the SIR2-homolog deacetylase activates the enzyme.

The catalysed reaction is acetate + ATP + CoA = acetyl-CoA + AMP + diphosphate. In terms of biological role, catalyzes the conversion of acetate into acetyl-CoA (AcCoA), an essential intermediate at the junction of anabolic and catabolic pathways. AcsA undergoes a two-step reaction. In the first half reaction, AcsA combines acetate with ATP to form acetyl-adenylate (AcAMP) intermediate. In the second half reaction, it can then transfer the acetyl group from AcAMP to the sulfhydryl group of CoA, forming the product AcCoA. This Shewanella sp. (strain MR-7) protein is Acetyl-coenzyme A synthetase.